Consider the following 184-residue polypeptide: MSDIINETKSKMQKSIDNLSRELANISAGRANSNLLNGVNVDYYGAPTPVQQLASISVPEARLLVISPYDKSSVGNIEKAINAANLGVNPSSDGEVIRISVPALTEERRKELVKDVKKIGEDAKVAVRNVRRDSNDELKKQQKNSDITEDDLRTQTDDVQKLTDDSIKEVEKLLEEKEQDIMSV.

The segment at 133 to 153 (DSNDELKKQQKNSDITEDDLR) is disordered.

The protein belongs to the RRF family.

It is found in the cytoplasm. Responsible for the release of ribosomes from messenger RNA at the termination of protein biosynthesis. May increase the efficiency of translation by recycling ribosomes from one round of translation to another. This is Ribosome-recycling factor from Staphylococcus saprophyticus subsp. saprophyticus (strain ATCC 15305 / DSM 20229 / NCIMB 8711 / NCTC 7292 / S-41).